Consider the following 1581-residue polypeptide: MVDAGGRCAAEGWRRMEAPPEGADLVPLDRYDAARAKIAANLQWICAKAYGLDNIPEDLRDPFYIDQYEQEHIKPPVIKLLLSSELYCRVCSLILKGDQVATLQGHQSVIQALSRKGIYVMESDDTPVTDADLSQAPIKMSGHMAMVDALMMAYTVEMISIEKVVASVKRFSTFSASKELPYDLEDAMVFWINKVNLKMREITEKEVKLKQQPLESPAHQKVRYRREHLSARQSPYFPLLEDLMRDGSDGAALLAVVHYYCPEQMKLDDICLKEVPSMADSLYNIRLLREFSNEHLNKCFYLTLEDMLYAPLVLKPNVMVFIAELFWWFENVKPDFVQPRDIQELKDAKTVLQQKSSRPPVPISNATKRSFLGSPAAMSPADQPPSTQPLAEGSHRYHLHSEEPECLGKGASTFSPSHPLLPLRQKQQKVSQTEEIPDQRHRSNSLTRVDGQPRGAIGAWPDKKNRPVSQPTSFALHHAASCDVDPSSGDSVSLARSISKDSLASNIIHLTPQNQPHPSAGKSNGKSLLSNVNIEDEDEELVAIIRTDVSPPSPQMPRTSPQAPGLVASIRSPQRQADTLESKPDSFYLEPLMPAVLRPAKEKQITTKEDERGEGRPRTIMAKRPSEGSQPMVRKKVSGGHGSRDLNRTFTPIPCSEFAASIDLAEVGPQSAEATGEGQPLALGRFDTLPQGQAADGFFLHVGRAEEDEGRWYVGSQSPSSHDSEPWTILRQDSDSDVVDVEDTEQDFIGEDHPVVIPRYAGEEESAKLQEDMKVKEHEDKDDASGRSSPCLSTTSQLSSMSMASGSVKMTSFAERKLQRLNSCETKSSTSSSQKTTPDASESCPAPLTTWRQKREQSPGRHSKDPASLLASELVQLHMQLEEKRRAIEAQKKKMEALSARQRLKLGKAAFLHVVKKGKADGAPQPLRPEHFTKEFTQHNGEDLDDGTCKTEGFLVKEEQRDLSDAQDVAFVQLHKPRDPAALHDGEKHRMISTALLEDSVGEVDVNECDLSIEKLNETISTLQQAILKISQQQEQLLMKSPTVPTPGTKNNCQDQKIKAPVHFVEPLSPTGVPGHRKPPRLGQGRNSRSGRPAELKVPKDRQQGCSRSKTPTPSVETLPQSRSLPPSTHPRSPSDPGGELPEKCLFDSYRLHDESNHRTFVLSSCKDANIVSEQVNFKEGLDTSVKEAGLSSSTITGKEHTPVEEPLRSKASLIEVDLSDLKAPDEDGEVVGHESSVELGGDSDQKPGVGFFFKDEQKAEDELAKKRAAFLLKQQRKAEEARARKQQLEAEVELKRDEARRKAEEDRLRKEEEKARRELIKQEYLRRKQQQALEEQGLGKPKSKPKKPRPKSVHREESYSDSGTKCSSTHNLSQTHSGSSLSLASAATTEPESVYSGGTPSHRVESLEALPILSRNPSRSTDRDWETASAASSLASVAEYTGPKLFKEPSSKSNKPIIHNAISHCCLAGKVNEPHKNSILELEKCDANHYIILFRDAGCQFRALYCYQPDTEEIYKLTGTGPKSITKKMIDKLYKYSSDRKQFNLIPAKTMSVSVDALTIHNHLWQPKRPTVPKKTQTRK.

The 116-residue stretch at E215–E330 folds into the Calponin-homology (CH) domain. S216, S370, S374, and S415 each carry phosphoserine. Residues V351–L399 are disordered. Positions R424 to Q470 are disordered. Residue T511 is modified to Phosphothreonine. Phosphoserine occurs at positions 550, 553, 560, 572, and 586. The span at K603–P617 shows a compositional bias: basic and acidic residues. Residues K603 to T649 form a disordered region. A phosphoserine mark is found at S626, S718, S724, S734, and S736. Over residues E765–S785 the composition is skewed to basic and acidic residues. Disordered stretches follow at residues E765–M803 and L821–P866. Low complexity-rich tracts occupy residues L792 to M803 and T826 to T837. Positions Q853–D865 are enriched in basic and acidic residues. Residues A867–I888 are sufficient for interaction with SPTBN1. 2 coiled-coil regions span residues L869–K905 and D1005–L1037. The segment at S899–G918 is sufficient for interaction with calmodulin. Disordered stretches follow at residues F1064–E1143, P1225–G1251, Q1288–K1315, and Q1332–T1428. S1069 is modified (phosphoserine). A compositionally biased stretch (basic and acidic residues) spans R1092–Q1103. A compositionally biased stretch (polar residues) spans Q1104–R1132. Position 1133 is a phosphoserine (S1133). Residues P1225–S1237 are compositionally biased toward basic and acidic residues. A coiled-coil region spans residues A1265–E1336. Residues P1342–S1353 are compositionally biased toward basic residues. The segment covering S1361–N1372 has biased composition (polar residues). A compositionally biased stretch (low complexity) spans L1373 to T1390. 2 positions are modified to phosphoserine: S1378 and S1407. A CKK domain is found at G1443 to K1576. Y1516 bears the Phosphotyrosine mark.

This sequence belongs to the CAMSAP1 family. In terms of assembly, interacts with spectrin via SPTBN1; the interaction is direct. Interacts with calmodulin; calcium-dependent it prevents interaction with spectrin. In terms of tissue distribution, expressed in the central nervous system.

It localises to the cytoplasm. Its subcellular location is the cytoskeleton. Functionally, key microtubule-organizing protein that specifically binds the minus-end of non-centrosomal microtubules and regulates their dynamics and organization. Specifically recognizes growing microtubule minus-ends and stabilizes microtubules. Acts on free microtubule minus-ends that are not capped by microtubule-nucleating proteins or other factors and protects microtubule minus-ends from depolymerization. In contrast to CAMSAP2 and CAMSAP3, tracks along the growing tips of minus-end microtubules without significantly affecting the polymerization rate: binds at the very tip of the microtubules minus-end and acts as a minus-end tracking protein (-TIP) that dissociates from microtubules after allowing tubulin incorporation. Through interaction with spectrin may regulate neurite outgrowth. In Mus musculus (Mouse), this protein is Calmodulin-regulated spectrin-associated protein 1 (Camsap1).